The following is a 448-amino-acid chain: Trigger factor (448 aa).

The 86-residue stretch at glycine 172–proline 257 folds into the PPIase FKBP-type domain.

The protein belongs to the FKBP-type PPIase family. Tig subfamily.

The protein localises to the cytoplasm. It carries out the reaction [protein]-peptidylproline (omega=180) = [protein]-peptidylproline (omega=0). In terms of biological role, involved in protein export. Acts as a chaperone by maintaining the newly synthesized protein in an open conformation. Functions as a peptidyl-prolyl cis-trans isomerase. The protein is Trigger factor of Burkholderia ambifaria (strain ATCC BAA-244 / DSM 16087 / CCUG 44356 / LMG 19182 / AMMD) (Burkholderia cepacia (strain AMMD)).